We begin with the raw amino-acid sequence, 555 residues long: CTP synthase (555 aa).

Positions 1-265 (MTRYIFITGG…GNRVCEKLNI (265 aa)) are amidoligase domain. CTP is bound at residue S13. S13 serves as a coordination point for UTP. ATP is bound by residues 14–19 (SLGKGI) and D71. Mg(2+) contacts are provided by D71 and E139. Residues 146–148 (DIE), 186–191 (KTKPTQ), and K222 each bind CTP. Residues 186-191 (KTKPTQ) and K222 each bind UTP. The Glutamine amidotransferase type-1 domain maps to 290–541 (TVAVVGKYVD…IKAGLAAKEA (252 aa)). Position 351 (G351) interacts with L-glutamine. The Nucleophile; for glutamine hydrolysis role is filled by C378. Residues 379-382 (LGMQ), E402, and R469 contribute to the L-glutamine site. Residues H514 and E516 contribute to the active site.

This sequence belongs to the CTP synthase family. In terms of assembly, homotetramer.

It catalyses the reaction UTP + L-glutamine + ATP + H2O = CTP + L-glutamate + ADP + phosphate + 2 H(+). It carries out the reaction L-glutamine + H2O = L-glutamate + NH4(+). The catalysed reaction is UTP + NH4(+) + ATP = CTP + ADP + phosphate + 2 H(+). It participates in pyrimidine metabolism; CTP biosynthesis via de novo pathway; CTP from UDP: step 2/2. Allosterically activated by GTP, when glutamine is the substrate; GTP has no effect on the reaction when ammonia is the substrate. The allosteric effector GTP functions by stabilizing the protein conformation that binds the tetrahedral intermediate(s) formed during glutamine hydrolysis. Inhibited by the product CTP, via allosteric rather than competitive inhibition. Functionally, catalyzes the ATP-dependent amination of UTP to CTP with either L-glutamine or ammonia as the source of nitrogen. Regulates intracellular CTP levels through interactions with the four ribonucleotide triphosphates. The sequence is that of CTP synthase from Coxiella burnetii (strain RSA 493 / Nine Mile phase I).